A 439-amino-acid polypeptide reads, in one-letter code: Capsid vertex component 1 (439 aa).

Belongs to the herpesviridae CVC1 protein family. Interacts (via C-terminus) with capsid vertex component 2/CVC2.

It is found in the virion. The protein resides in the host nucleus. Capsid vertex-specific component that plays a role during viral DNA encapsidation, assuring correct genome cleavage and presumably stabilizing capsids that contain full-length viral genomes. This chain is Capsid vertex component 1, found in Homo sapiens (Human).